The chain runs to 478 residues: GTPase Obg (478 aa).

In terms of domain architecture, Obg spans 2 to 159 (TTFVDRVELH…QDIHLELKTV (158 aa)). The segment at 60 to 88 (YHHSPHRKATNGKPGEGGNRSGKDGQDLV) is disordered. The OBG-type G domain occupies 160 to 330 (ADVALVGYPS…LSFALAELVA (171 aa)). GTP-binding positions include 166 to 173 (GYPSAGKS), 191 to 195 (FTTLV), 212 to 215 (DVPG), 282 to 285 (NKID), and 311 to 313 (SAV). Mg(2+)-binding residues include Ser-173 and Thr-193. Residues 348–430 (PKAVDDAGFT…DNAVVFDWEP (83 aa)) form the OCT domain. Positions 438–478 (MLGRRGEDHRFEAPRPAAQRRRDRDAERDEAQQEFDGFEPF) are disordered. Basic and acidic residues-rich tracts occupy residues 439–450 (LGRRGEDHRFEA) and 457–468 (RRRDRDAERDEA). Residues 469–478 (QQEFDGFEPF) are compositionally biased toward acidic residues.

This sequence belongs to the TRAFAC class OBG-HflX-like GTPase superfamily. OBG GTPase family. Monomer. Mg(2+) is required as a cofactor.

Its subcellular location is the cytoplasm. The protein localises to the cell membrane. Functionally, plays an unknown essential role and a regulatory role in sporulation. Overexpression suppresses sporulation although cell growth rate was not reduced. Impaired differentiation was eliminated by addition of decoyinine, an inhibitor of GMP synthesis. Overexpression has no effect on undecylprodigiosin production, but decreases actinorhodin production. In terms of biological role, an essential GTPase which binds GTP, GDP and possibly (p)ppGpp with moderate affinity, with high nucleotide exchange rates and a fairly low GTP hydrolysis rate. Plays a role in control of the cell cycle, stress response, ribosome biogenesis and in those bacteria that undergo differentiation, in morphogenesis control. This chain is GTPase Obg, found in Streptomyces coelicolor (strain ATCC BAA-471 / A3(2) / M145).